We begin with the raw amino-acid sequence, 414 residues long: Esterase FrsA (414 aa).

This sequence belongs to the FrsA family.

The catalysed reaction is a carboxylic ester + H2O = an alcohol + a carboxylate + H(+). In terms of biological role, catalyzes the hydrolysis of esters. The protein is Esterase FrsA of Escherichia coli (strain K12 / DH10B).